A 166-amino-acid polypeptide reads, in one-letter code: Regulatory protein RecX (166 aa).

The protein belongs to the RecX family.

The protein localises to the cytoplasm. In terms of biological role, modulates RecA activity. In Escherichia coli O7:K1 (strain IAI39 / ExPEC), this protein is Regulatory protein RecX.